A 233-amino-acid polypeptide reads, in one-letter code: MDAYEIIQYIGDAKKQTLVKVTLKGQLKEVTFPETIKVFNNCKTGTLFGDWADVKPFLEANKEKIEDYVVENDARNSAIPFLDLKDINARIEPGALIREKVEIGDQAVIMMGAILNIGAVVGAGTMIDMGAVLGGRATVGKHCHIGAGTVLAGVIEPPSAAPVVIENEVVIGANAVVLEGVRVGEGAVVAAGAVVVEDVPAHTVVAGVPAKVIKQIDDKTKSKTEILEELRKL.

This sequence belongs to the transferase hexapeptide repeat family. DapH subfamily.

It carries out the reaction (S)-2,3,4,5-tetrahydrodipicolinate + acetyl-CoA + H2O = L-2-acetamido-6-oxoheptanedioate + CoA. It functions in the pathway amino-acid biosynthesis; L-lysine biosynthesis via DAP pathway; LL-2,6-diaminopimelate from (S)-tetrahydrodipicolinate (acetylase route): step 1/3. Functionally, catalyzes the transfer of an acetyl group from acetyl-CoA to tetrahydrodipicolinate. This Enterococcus faecalis (strain ATCC 700802 / V583) protein is 2,3,4,5-tetrahydropyridine-2,6-dicarboxylate N-acetyltransferase.